We begin with the raw amino-acid sequence, 474 residues long: Transcription termination factor Rho (474 aa).

A disordered region spans residues 1-60 (MTEELDNTPSPAGDIPQETLPKPLPAPEETAGEQPAAAPEENRGNAVREEEEAAPVLEQI). Residues 107-182 (EVVVSGVMEQ…ASVISVEDIP (76 aa)) enclose the Rho RNA-BD domain. ATP-binding positions include 226–231 (GKGQRG), 238–243 (RGGKTV), and Arg-269.

The protein belongs to the Rho family. In terms of assembly, homohexamer. The homohexamer assembles into an open ring structure.

Facilitates transcription termination by a mechanism that involves Rho binding to the nascent RNA, activation of Rho's RNA-dependent ATPase activity, and release of the mRNA from the DNA template. In Akkermansia muciniphila (strain ATCC BAA-835 / DSM 22959 / JCM 33894 / BCRC 81048 / CCUG 64013 / CIP 107961 / Muc), this protein is Transcription termination factor Rho.